Consider the following 221-residue polypeptide: CASP-like protein 4B1 (221 aa).

Residues Met1–Gly78 form a disordered region. The Cytoplasmic segment spans residues Met1 to Gly87. A compositionally biased stretch (pro residues) spans Ser19–Ala33. Residues Ala50–Gly62 show a composition bias toward low complexity. Residues Ile88–Ala108 traverse the membrane as a helical segment. Over Ser109–Arg125 the chain is Extracellular. A helical membrane pass occupies residues Tyr126–Phe146. Residues Arg147–Asp160 are Cytoplasmic-facing. A helical transmembrane segment spans residues Phe161–Ile181. At Thr182–Ala196 the chain is on the extracellular side. A helical membrane pass occupies residues Ile197 to Leu217. Residues Ser218–Ala221 are Cytoplasmic-facing.

It belongs to the Casparian strip membrane proteins (CASP) family. As to quaternary structure, homodimer and heterodimers.

The protein localises to the cell membrane. This Hordeum vulgare subsp. vulgare (Domesticated barley) protein is CASP-like protein 4B1.